The primary structure comprises 442 residues: 3-dehydroquinate synthase, chloroplastic (442 aa).

The transit peptide at 1–58 (MAANTISLSNVAASKNLNSFQSRAFIAPPTIFFPVASAKSKPGELSLSSTTLSRSRVR) directs the protein to the chloroplast. Ala59 is subject to N-acetylalanine. NAD(+) contacts are provided by residues Asn119, 150–152 (DGE), Lys155, 183–188 (GGVIGD), 208–209 (TT), Lys221, Lys230, and 248–251 (TLNT). Residue Glu263 participates in a divalent metal cation binding. Residue Lys305 coordinates NAD(+). A divalent metal cation contacts are provided by His326 and His343.

Belongs to the sugar phosphate cyclases superfamily. Dehydroquinate synthase family. Homodimer. Requires a divalent metal cation as cofactor. NAD(+) is required as a cofactor.

The protein resides in the plastid. Its subcellular location is the chloroplast. It carries out the reaction 7-phospho-2-dehydro-3-deoxy-D-arabino-heptonate = 3-dehydroquinate + phosphate. It participates in metabolic intermediate biosynthesis; chorismate biosynthesis; chorismate from D-erythrose 4-phosphate and phosphoenolpyruvate: step 2/7. Its function is as follows. Catalyzes the second step in the shikimate pathway. The polypeptide is 3-dehydroquinate synthase, chloroplastic (DHQS) (Arabidopsis thaliana (Mouse-ear cress)).